Here is a 151-residue protein sequence, read N- to C-terminus: Large ribosomal subunit protein uL15 (151 aa).

Positions 1–57 (MTLRLDSLKANKGARRRKLRKGRGIAAGQGASCGFGMRGQKSRSGRPTRPGFEGGQM) are disordered. Residues 12–23 (KGARRRKLRKGR) show a composition bias toward basic residues. The segment covering 25–37 (IAAGQGASCGFGM) has biased composition (gly residues).

The protein belongs to the universal ribosomal protein uL15 family. In terms of assembly, part of the 50S ribosomal subunit.

Binds to the 23S rRNA. The chain is Large ribosomal subunit protein uL15 from Synechococcus sp. (strain CC9902).